We begin with the raw amino-acid sequence, 464 residues long: A-type ATP synthase subunit B (464 aa).

This sequence belongs to the ATPase alpha/beta chains family. Has multiple subunits with at least A(3), B(3), C, D, E, F, H, I and proteolipid K(x).

Its subcellular location is the cell membrane. Its function is as follows. Component of the A-type ATP synthase that produces ATP from ADP in the presence of a proton gradient across the membrane. The B chain is a regulatory subunit. This Methanococcus aeolicus (strain ATCC BAA-1280 / DSM 17508 / OCM 812 / Nankai-3) protein is A-type ATP synthase subunit B.